We begin with the raw amino-acid sequence, 151 residues long: Acidic phospholipase A2 3 (151 aa).

Residues 1–27 (MYPAHLLVLLAVCVSLLGAASIPARPL) form the signal peptide. Cystine bridges form between Cys-38–Cys-104, Cys-54–Cys-151, Cys-56–Cys-72, Cys-71–Cys-132, Cys-78–Cys-125, Cys-88–Cys-118, and Cys-111–Cys-123. Ca(2+)-binding residues include Tyr-55, Gly-57, and Gly-59. The active site involves His-75. A Ca(2+)-binding site is contributed by Asp-76. Asp-126 is an active-site residue.

Belongs to the phospholipase A2 family. Group I subfamily. D49 sub-subfamily. It depends on Ca(2+) as a cofactor. In terms of tissue distribution, expressed by the venom gland.

It localises to the secreted. The catalysed reaction is a 1,2-diacyl-sn-glycero-3-phosphocholine + H2O = a 1-acyl-sn-glycero-3-phosphocholine + a fatty acid + H(+). Functionally, PLA2 catalyzes the calcium-dependent hydrolysis of the 2-acyl groups in 3-sn-phosphoglycerides. This chain is Acidic phospholipase A2 3, found in Tropidechis carinatus (Australian rough-scaled snake).